A 646-amino-acid chain; its full sequence is Serine/threonine-protein kinase PLK3 (646 aa).

A disordered region spans residues 1–35; it reads MEPAAGFLSPRPFQRAAAAPAPPAGPGPPPSALRG. Residues 10–19 are compositionally biased toward low complexity; it reads PRPFQRAAAA. Pro residues predominate over residues 20 to 31; it reads PAPPAGPGPPPS. Residues 62 to 314 form the Protein kinase domain; it reads YLKGRLLGKG…IDQILRHDFF (253 aa). ATP contacts are provided by residues 68–76 and Lys-91; that span reads LGKGGFARC. Asp-185 functions as the Proton acceptor in the catalytic mechanism. The interval 381–417 is disordered; it reads GHQDARPEAPAASGPAPVSLVETAPEDSSPRGTLASS. 2 POLO box domains span residues 463 to 541 and 562 to 645; these read WVSK…YMEQ and LLLQ…DRSP.

Belongs to the protein kinase superfamily. Ser/Thr protein kinase family. CDC5/Polo subfamily. As to quaternary structure, interacts (via the POLO-box domain) with CIB1; leading to inhibit PLK3 kinase activity. Interacts with GOLGB1. In terms of processing, phosphorylated in an ATM-dependent manner following DNA damage. Phosphorylated as cells enter mitosis and dephosphorylated as cells exit mitosis. As to expression, transcripts are highly detected in placenta, lung, followed by skeletal muscle, heart, pancreas, ovaries and kidney and weakly detected in liver and brain. May have a short half-live. In cells of hematopoietic origin, strongly and exclusively detected in terminally differentiated macrophages. Transcript expression appears to be down-regulated in primary lung tumor.

The protein localises to the cytoplasm. It is found in the nucleus. It localises to the nucleolus. The protein resides in the golgi apparatus. Its subcellular location is the cytoskeleton. The protein localises to the microtubule organizing center. It is found in the centrosome. It carries out the reaction L-seryl-[protein] + ATP = O-phospho-L-seryl-[protein] + ADP + H(+). It catalyses the reaction L-threonyl-[protein] + ATP = O-phospho-L-threonyl-[protein] + ADP + H(+). Its function is as follows. Serine/threonine-protein kinase involved in cell cycle regulation, response to stress and Golgi disassembly. Polo-like kinases act by binding and phosphorylating proteins that are already phosphorylated on a specific motif recognized by the POLO box domains. Phosphorylates ATF2, BCL2L1, CDC25A, CDC25C, CHEK2, HIF1A, JUN, p53/TP53, p73/TP73, PTEN, TOP2A and VRK1. Involved in cell cycle regulation: required for entry into S phase and cytokinesis. Phosphorylates BCL2L1, leading to regulate the G2 checkpoint and progression to cytokinesis during mitosis. Plays a key role in response to stress: rapidly activated upon stress stimulation, such as ionizing radiation, reactive oxygen species (ROS), hyperosmotic stress, UV irradiation and hypoxia. Involved in DNA damage response and G1/S transition checkpoint by phosphorylating CDC25A, p53/TP53 and p73/TP73. Phosphorylates p53/TP53 in response to reactive oxygen species (ROS), thereby promoting p53/TP53-mediated apoptosis. Phosphorylates CHEK2 in response to DNA damage, promoting the G2/M transition checkpoint. Phosphorylates the transcription factor p73/TP73 in response to DNA damage, leading to inhibit p73/TP73-mediated transcriptional activation and pro-apoptotic functions. Phosphorylates HIF1A and JUN is response to hypoxia. Phosphorylates ATF2 following hyperosmotic stress in corneal epithelium. Also involved in Golgi disassembly during the cell cycle: part of a MEK1/MAP2K1-dependent pathway that induces Golgi fragmentation during mitosis by mediating phosphorylation of VRK1. May participate in endomitotic cell cycle, a form of mitosis in which both karyokinesis and cytokinesis are interrupted and is a hallmark of megakaryocyte differentiation, via its interaction with CIB1. This Homo sapiens (Human) protein is Serine/threonine-protein kinase PLK3 (PLK3).